The sequence spans 347 residues: Quinolinate synthase (347 aa).

Residues His47 and Ser68 each contribute to the iminosuccinate site. A [4Fe-4S] cluster-binding site is contributed by Cys113. Iminosuccinate is bound by residues 139–141 (YAN) and Ser156. Cys200 lines the [4Fe-4S] cluster pocket. Residues 226–228 (HPE) and Thr243 each bind iminosuccinate. A [4Fe-4S] cluster-binding site is contributed by Cys297.

Belongs to the quinolinate synthase family. Type 1 subfamily. Requires [4Fe-4S] cluster as cofactor.

It localises to the cytoplasm. The enzyme catalyses iminosuccinate + dihydroxyacetone phosphate = quinolinate + phosphate + 2 H2O + H(+). It functions in the pathway cofactor biosynthesis; NAD(+) biosynthesis; quinolinate from iminoaspartate: step 1/1. Functionally, catalyzes the condensation of iminoaspartate with dihydroxyacetone phosphate to form quinolinate. In Escherichia coli O7:K1 (strain IAI39 / ExPEC), this protein is Quinolinate synthase.